Consider the following 174-residue polypeptide: Small ribosomal subunit protein uS5 (174 aa).

The 64-residue stretch at 16 to 79 folds into the S5 DRBM domain; it reads LSELLVSVRR…NAAKKSMIRV (64 aa).

It belongs to the universal ribosomal protein uS5 family. Part of the 30S ribosomal subunit. Contacts proteins S4 and S8.

With S4 and S12 plays an important role in translational accuracy. Functionally, located at the back of the 30S subunit body where it stabilizes the conformation of the head with respect to the body. This Anaplasma marginale (strain Florida) protein is Small ribosomal subunit protein uS5.